A 172-amino-acid chain; its full sequence is Transcription factor MafF (172 aa).

Positions 51–76 (RLKQRRRTLKNRGYAASCRVKRVCQK) are basic motif. The 64-residue stretch at 51-114 (RLKQRRRTLK…DALRGKCEAL (64 aa)) folds into the bZIP domain. A leucine-zipper region spans residues 79-93 (LQKQKSELEREVDKL). The interval 140 to 172 (VKSAPSPGPGPAPGPGPASGPGPAPGPAPAACS) is disordered. The segment covering 145 to 172 (SPGPGPAPGPGPASGPGPAPGPAPAACS) has biased composition (pro residues).

Belongs to the bZIP family. Maf subfamily. In terms of assembly, monomer and homo- or heterodimer. Interacts with MIP. Forms high affinity heterodimers with members of the CNC-bZIP family such as NFE2L1/NRF1.

It localises to the nucleus. Since they lack a putative transactivation domain, the small Mafs behave as transcriptional repressors when they dimerize among themselves. However, they seem to serve as transcriptional activators by dimerizing with other (usually larger) basic-zipper proteins, such as NFE2L1/NRF1, and recruiting them to specific DNA-binding sites. Interacts with the upstream promoter region of the oxytocin receptor gene. May be a transcriptional enhancer in the up-regulation of the oxytocin receptor gene at parturition. This is Transcription factor MafF (MAFF) from Bos taurus (Bovine).